We begin with the raw amino-acid sequence, 1722 residues long: Lymphocyte antigen 75 (1722 aa).

An N-terminal signal peptide occupies residues Met1–Pro27. Over Ser28–Asp1666 the chain is Extracellular. In terms of domain architecture, Ricin B-type lectin spans Asn33–Glu156. Residue Asn135 is glycosylated (N-linked (GlcNAc...) asparagine). Residues Ser164–Lys211 enclose the Fibronectin type-II domain. 4 disulfide bridges follow: Cys169–Cys194, Cys183–Cys209, Cys247–Cys340, and Cys317–Cys332. Residues Gln225–Arg341 enclose the C-type lectin 1 domain. Residues Asn345 and Asn377 are each glycosylated (N-linked (GlcNAc...) asparagine). C-type lectin domains are found at residues Asn368–Lys486, Asn493–Lys625, Ala652–Arg778, and Ile818–Glu931. Intrachain disulfides connect Cys389/Cys485 and Cys462/Cys477. An N-linked (GlcNAc...) asparagine glycan is attached at Asn529. Cys597 and Cys614 form a disulfide bridge. 2 disulfide bridges follow: Cys840–Cys930 and Cys904–Cys922. 2 N-linked (GlcNAc...) asparagine glycosylation sites follow: Asn843 and Asn865. The residue at position 933 (Tyr933) is a Phosphotyrosine. 3 N-linked (GlcNAc...) asparagine glycosylation sites follow: Asn934, Asn1076, and Asn1103. The 134-residue stretch at Phe958 to Lys1091 folds into the C-type lectin 6 domain. Residues Cys1060 and Cys1080 are joined by a disulfide bond. Positions Tyr1110–Tyr1222 constitute a C-type lectin 7 domain. A disulfide bridge links Cys1197 with Cys1211. Residues Asn1225, Asn1320, and Asn1392 are each glycosylated (N-linked (GlcNAc...) asparagine). The C-type lectin 8 domain maps to Phe1251 to Gln1374. C-type lectin domains lie at Tyr1401 to Lys1513 and Tyr1542 to Val1661. A disulfide bond links Cys1488 and Cys1502. Residues Asn1593 and Asn1626 are each glycosylated (N-linked (GlcNAc...) asparagine). Cys1635 and Cys1650 form a disulfide bridge. The helical transmembrane segment at Tyr1667–Phe1691 threads the bilayer. Residues Gln1692–Asp1722 lie on the Cytoplasmic side of the membrane. Phosphoserine is present on residues Ser1703 and Ser1719.

N-glycosylated. As to expression, expressed in spleen, thymus, colon and peripheral blood lymphocytes. Detected in myeloid and B-lymphoid cell lines. Isoform 2 and isoform 3 are expressed in malignant Hodgkin lymphoma cells called Hodgkin and Reed-Sternberg (HRS) cells.

It localises to the membrane. In terms of biological role, acts as an endocytic receptor to direct captured antigens from the extracellular space to a specialized antigen-processing compartment. Causes reduced proliferation of B-lymphocytes. The protein is Lymphocyte antigen 75 (LY75) of Homo sapiens (Human).